The sequence spans 321 residues: Ribose-phosphate pyrophosphokinase (321 aa).

ATP is bound by residues 44-46 and 103-104; these read DGE and RQ. The Mg(2+) site is built by histidine 137 and aspartate 179. Lysine 202 is a catalytic residue. Residues arginine 204, aspartate 228, and 232 to 236 each bind D-ribose 5-phosphate; that span reads DTAGT.

It belongs to the ribose-phosphate pyrophosphokinase family. Class I subfamily. Homohexamer. Mg(2+) is required as a cofactor.

The protein resides in the cytoplasm. The catalysed reaction is D-ribose 5-phosphate + ATP = 5-phospho-alpha-D-ribose 1-diphosphate + AMP + H(+). It functions in the pathway metabolic intermediate biosynthesis; 5-phospho-alpha-D-ribose 1-diphosphate biosynthesis; 5-phospho-alpha-D-ribose 1-diphosphate from D-ribose 5-phosphate (route I): step 1/1. Functionally, involved in the biosynthesis of the central metabolite phospho-alpha-D-ribosyl-1-pyrophosphate (PRPP) via the transfer of pyrophosphoryl group from ATP to 1-hydroxyl of ribose-5-phosphate (Rib-5-P). The protein is Ribose-phosphate pyrophosphokinase of Staphylococcus aureus (strain COL).